A 312-amino-acid polypeptide reads, in one-letter code: HTH-type transcriptional regulator TdcA (312 aa).

Residues 7–64 (PKTQHLVVFQEVIRSGSIGSAAKELGLTQPAVSKIINDIEDYFGVELVVRKNTGVTLT) enclose the HTH lysR-type domain. Residues 24–43 (IGSAAKELGLTQPAVSKIIN) constitute a DNA-binding region (H-T-H motif).

This sequence belongs to the LysR transcriptional regulatory family.

It functions in the pathway amino-acid degradation; L-threonine degradation via propanoate pathway [regulation]. In terms of biological role, transcriptional activator for the tdcABCDE operon. This chain is HTH-type transcriptional regulator TdcA (tdcA), found in Escherichia coli O157:H7.